The primary structure comprises 460 residues: Notoamide biosynthesis cluster transcriptional coactivator notR (460 aa).

In terms of domain architecture, HTH iclR-type spans 74-145; it reads LQDLARQVEI…EPMPNYVSHT (72 aa). A DNA-binding region (H-T-H motif) is located at residues 107–126; that stretch reads IQDLADLAGVPDIQLRRVIR. The interval 300 to 320 is disordered; sequence TRDFTPQPESSPRPGSASSRV.

Its subcellular location is the nucleus. Transcription factor that probably regulates the expression of the gene cluster that mediates the biosynthesis of notoamide, a fungal indole alkaloid that belongs to a family of natural products containing a characteristic bicyclo[2.2.2]diazaoctane core. The protein is Notoamide biosynthesis cluster transcriptional coactivator notR of Aspergillus sp. (strain MF297-2).